A 117-amino-acid chain; its full sequence is Prefoldin subunit beta (117 aa).

Belongs to the prefoldin subunit beta family. Heterohexamer of two alpha and four beta subunits.

It localises to the cytoplasm. Its function is as follows. Molecular chaperone capable of stabilizing a range of proteins. Seems to fulfill an ATP-independent, HSP70-like function in archaeal de novo protein folding. The sequence is that of Prefoldin subunit beta from Pyrococcus furiosus (strain ATCC 43587 / DSM 3638 / JCM 8422 / Vc1).